Reading from the N-terminus, the 336-residue chain is Phospho-N-acetylmuramoyl-pentapeptide-transferase (336 aa).

A run of 10 helical transmembrane segments spans residues Leu3–Ile23, Met52–Leu72, Asn79–Leu99, Leu123–Asn143, Ile144–Val164, Gly175–Ala195, Phe201–Asn221, Val227–Ala247, Leu255–Phe275, and Val315–Tyr335.

It belongs to the glycosyltransferase 4 family. MraY subfamily. Mg(2+) serves as cofactor.

It is found in the cell membrane. It catalyses the reaction UDP-N-acetyl-alpha-D-muramoyl-L-alanyl-gamma-D-glutamyl-L-lysyl-D-alanyl-D-alanine + di-trans,octa-cis-undecaprenyl phosphate = Mur2Ac(oyl-L-Ala-gamma-D-Glu-L-Lys-D-Ala-D-Ala)-di-trans,octa-cis-undecaprenyl diphosphate + UMP. Its pathway is cell wall biogenesis; peptidoglycan biosynthesis. Catalyzes the initial step of the lipid cycle reactions in the biosynthesis of the cell wall peptidoglycan: transfers peptidoglycan precursor phospho-MurNAc-pentapeptide from UDP-MurNAc-pentapeptide onto the lipid carrier undecaprenyl phosphate, yielding undecaprenyl-pyrophosphoryl-MurNAc-pentapeptide, known as lipid I. The protein is Phospho-N-acetylmuramoyl-pentapeptide-transferase of Streptococcus agalactiae serotype Ia (strain ATCC 27591 / A909 / CDC SS700).